Reading from the N-terminus, the 58-residue chain is Small ribosomal subunit protein bS21 (58 aa).

Belongs to the bacterial ribosomal protein bS21 family.

The chain is Small ribosomal subunit protein bS21 from Lactobacillus acidophilus (strain ATCC 700396 / NCK56 / N2 / NCFM).